We begin with the raw amino-acid sequence, 429 residues long: 3-phosphoshikimate 1-carboxyvinyltransferase (429 aa).

3 residues coordinate 3-phosphoshikimate: lysine 23, serine 24, and arginine 28. Lysine 23 is a binding site for phosphoenolpyruvate. Residues glycine 95 and arginine 123 each contribute to the phosphoenolpyruvate site. 3-phosphoshikimate is bound by residues serine 168, glutamine 170, aspartate 316, and lysine 343. Glutamine 170 contacts phosphoenolpyruvate. Aspartate 316 serves as the catalytic Proton acceptor. The phosphoenolpyruvate site is built by arginine 347 and arginine 389.

The protein belongs to the EPSP synthase family. Monomer.

The protein resides in the cytoplasm. It carries out the reaction 3-phosphoshikimate + phosphoenolpyruvate = 5-O-(1-carboxyvinyl)-3-phosphoshikimate + phosphate. Its pathway is metabolic intermediate biosynthesis; chorismate biosynthesis; chorismate from D-erythrose 4-phosphate and phosphoenolpyruvate: step 6/7. Its function is as follows. Catalyzes the transfer of the enolpyruvyl moiety of phosphoenolpyruvate (PEP) to the 5-hydroxyl of shikimate-3-phosphate (S3P) to produce enolpyruvyl shikimate-3-phosphate and inorganic phosphate. The sequence is that of 3-phosphoshikimate 1-carboxyvinyltransferase from Bacillus cereus (strain B4264).